Here is a 483-residue protein sequence, read N- to C-terminus: Xylulose kinase (483 aa).

A substrate-binding site is contributed by 79-80 (MH).

The protein belongs to the FGGY kinase family.

It carries out the reaction D-xylulose + ATP = D-xylulose 5-phosphate + ADP + H(+). Functionally, catalyzes the phosphorylation of D-xylulose to D-xylulose 5-phosphate. This Staphylococcus xylosus protein is Xylulose kinase.